The primary structure comprises 1273 residues: DNA-directed RNA polymerase subunit beta (1273 aa).

The tract at residues 1252 to 1273 (ADDQDLVVSSNDEEVSENDERS) is disordered.

This sequence belongs to the RNA polymerase beta chain family. The RNAP catalytic core consists of 2 alpha, 1 beta, 1 beta' and 1 omega subunit. When a sigma factor is associated with the core the holoenzyme is formed, which can initiate transcription.

The enzyme catalyses RNA(n) + a ribonucleoside 5'-triphosphate = RNA(n+1) + diphosphate. In terms of biological role, DNA-dependent RNA polymerase catalyzes the transcription of DNA into RNA using the four ribonucleoside triphosphates as substrates. In Dehalococcoides mccartyi (strain CBDB1), this protein is DNA-directed RNA polymerase subunit beta.